Here is a 349-residue protein sequence, read N- to C-terminus: Spermidine/putrescine import ATP-binding protein PotA (349 aa).

The 231-residue stretch at 7 to 237 (IELKGITKSY…PANSFVAKFI (231 aa)) folds into the ABC transporter domain. 39 to 46 (GPSGCGKT) is an ATP binding site.

The protein belongs to the ABC transporter superfamily. Spermidine/putrescine importer (TC 3.A.1.11.1) family. As to quaternary structure, the complex is composed of two ATP-binding proteins (PotA), two transmembrane proteins (PotB and PotC) and a solute-binding protein (PotD).

It is found in the cell membrane. It carries out the reaction ATP + H2O + polyamine-[polyamine-binding protein]Side 1 = ADP + phosphate + polyamineSide 2 + [polyamine-binding protein]Side 1.. Part of the ABC transporter complex PotABCD involved in spermidine/putrescine import. Responsible for energy coupling to the transport system. The chain is Spermidine/putrescine import ATP-binding protein PotA from Clostridium perfringens (strain SM101 / Type A).